A 463-amino-acid polypeptide reads, in one-letter code: Glutamate--tRNA ligase 2 (463 aa).

Residues P10–G20 carry the 'HIGH' region motif. The 'KMSKS' region signature appears at K238 to R242. K241 lines the ATP pocket.

The protein belongs to the class-I aminoacyl-tRNA synthetase family. Glutamate--tRNA ligase type 1 subfamily. Monomer.

It localises to the cytoplasm. The enzyme catalyses tRNA(Glu) + L-glutamate + ATP = L-glutamyl-tRNA(Glu) + AMP + diphosphate. In terms of biological role, catalyzes the attachment of glutamate to tRNA(Glu) in a two-step reaction: glutamate is first activated by ATP to form Glu-AMP and then transferred to the acceptor end of tRNA(Glu). The polypeptide is Glutamate--tRNA ligase 2 (Helicobacter acinonychis (strain Sheeba)).